Here is a 146-residue protein sequence, read N- to C-terminus: 3-dehydroquinate dehydratase (146 aa).

The active-site Proton acceptor is tyrosine 24. Asparagine 75, histidine 81, and aspartate 88 together coordinate substrate. Catalysis depends on histidine 101, which acts as the Proton donor. Residues 102 to 103 (LS) and arginine 112 each bind substrate.

The protein belongs to the type-II 3-dehydroquinase family. As to quaternary structure, homododecamer.

The enzyme catalyses 3-dehydroquinate = 3-dehydroshikimate + H2O. It functions in the pathway metabolic intermediate biosynthesis; chorismate biosynthesis; chorismate from D-erythrose 4-phosphate and phosphoenolpyruvate: step 3/7. Its function is as follows. Catalyzes a trans-dehydration via an enolate intermediate. This Maricaulis maris (strain MCS10) (Caulobacter maris) protein is 3-dehydroquinate dehydratase.